The following is a 550-amino-acid chain: Atherin (550 aa).

Over residues 1 to 11 (MAGPPALPPPE) the composition is skewed to pro residues. 2 disordered regions span residues 1 to 32 (MAGP…SPHY) and 93 to 468 (SYRN…KEKP). Residues 12-30 (TAAAATTAAAAASSSAASP) show a composition bias toward low complexity. Positions 24–100 (SSSAASPHYQ…SISYRNAARV (77 aa)) constitute an SAMD1-like winged helix (WH) domain. Thr108 carries the post-translational modification Phosphothreonine. A compositionally biased stretch (pro residues) spans 125 to 138 (APPPTPAPPPPPAP). A compositionally biased stretch (low complexity) spans 139–160 (VAAAAAPARAPRAAAAAAAATA). Phosphoserine is present on Ser163. Low complexity predominate over residues 170–179 (GPRAQRAAPL). Composition is skewed to pro residues over residues 180-205 (AAPP…PPPA) and 214-245 (PLPP…PPPE). The segment covering 246 to 257 (GGAARAGGPARP) has biased composition (low complexity). Phosphoserine is present on Ser270. The segment covering 290–300 (AAARGRLERTR) has biased composition (basic and acidic residues). A compositionally biased stretch (acidic residues) spans 337-355 (KEEEEEEEEDDEDDDDDVV). The segment covering 437 to 448 (SPSPVPLPPGKP) has biased composition (pro residues). Residues 474–542 (WTVMDVVEYF…KVLQQGHFED (69 aa)) enclose the SAM domain.

As to quaternary structure, homopolymerize into a closed pentameric ring. Interacts (via SAM domain) with L3MBTL3 (via SAM domain); the interaction mediates L3MBTL3 binding to chromatin. Interacts (via WH domain) with KDM1A; the interaction modulates KDM1A function.

Its subcellular location is the nucleus. The protein resides in the chromosome. It localises to the secreted. Its function is as follows. Unmethylated CpG islands (CGIs)-binding protein which localizes to H3K4me3-decorated CGIs, where it acts as a transcriptional repressor. Tethers L3MBTL3 to chromatin and interacts with the KDM1A histone demethylase complex to modulate H3K4me2 and H3K4me3 levels at CGIs. Plays a role in atherogenesis by binding with LDL on cell surface and promoting LDL oxidation which leads to the formation of foam cell. This chain is Atherin (SAMD1), found in Oryctolagus cuniculus (Rabbit).